The sequence spans 596 residues: Probable translation initiation factor IF-2 (596 aa).

The tr-type G domain occupies 3–220; sequence IRSPIVSVLG…MLLGLAQEYL (218 aa). Residues 12 to 19 form a G1 region; it reads GHVDHGKT. Position 12–19 (12–19) interacts with GTP; that stretch reads GHVDHGKT. Residues 37 to 41 form a G2 region; it reads GITQH. Positions 76–79 are G3; the sequence is DTPG. GTP contacts are provided by residues 76–80 and 130–133; these read DTPGH and NKID. Positions 130–133 are G4; the sequence is NKID. Residues 198 to 200 form a G5 region; the sequence is SAK.

This sequence belongs to the TRAFAC class translation factor GTPase superfamily. Classic translation factor GTPase family. IF-2 subfamily.

Its function is as follows. Function in general translation initiation by promoting the binding of the formylmethionine-tRNA to ribosomes. Seems to function along with eIF-2. This is Probable translation initiation factor IF-2 from Methanobrevibacter smithii (strain ATCC 35061 / DSM 861 / OCM 144 / PS).